A 334-amino-acid polypeptide reads, in one-letter code: Putative 2-hydroxyacid dehydrogenase UNK4.10 (334 aa).

Residues 166–167 (GI), 244–246 (TAR), and aspartate 270 each bind NAD(+). Residue arginine 246 is part of the active site. Glutamate 275 is an active-site residue. The active-site Proton donor is histidine 293. 293-296 (HLGT) lines the NAD(+) pocket.

This sequence belongs to the D-isomer specific 2-hydroxyacid dehydrogenase family.

The chain is Putative 2-hydroxyacid dehydrogenase UNK4.10 from Schizosaccharomyces pombe (strain 972 / ATCC 24843) (Fission yeast).